The following is a 282-amino-acid chain: Bis(5'-nucleosyl)-tetraphosphatase, symmetrical (282 aa).

This sequence belongs to the Ap4A hydrolase family.

It carries out the reaction P(1),P(4)-bis(5'-adenosyl) tetraphosphate + H2O = 2 ADP + 2 H(+). Hydrolyzes diadenosine 5',5'''-P1,P4-tetraphosphate to yield ADP. This Salmonella arizonae (strain ATCC BAA-731 / CDC346-86 / RSK2980) protein is Bis(5'-nucleosyl)-tetraphosphatase, symmetrical.